A 239-amino-acid chain; its full sequence is Hydroxyacylglutathione hydrolase (239 aa).

Residues histidine 54, histidine 56, aspartate 58, histidine 59, histidine 112, aspartate 131, and histidine 169 each contribute to the Zn(2+) site.

This sequence belongs to the metallo-beta-lactamase superfamily. Glyoxalase II family. Monomer. Zn(2+) serves as cofactor.

It carries out the reaction an S-(2-hydroxyacyl)glutathione + H2O = a 2-hydroxy carboxylate + glutathione + H(+). It functions in the pathway secondary metabolite metabolism; methylglyoxal degradation; (R)-lactate from methylglyoxal: step 2/2. Its function is as follows. Thiolesterase that catalyzes the hydrolysis of S-D-lactoyl-glutathione to form glutathione and D-lactic acid. This Pelagibacter ubique (strain HTCC1062) protein is Hydroxyacylglutathione hydrolase.